Consider the following 154-residue polypeptide: Large ribosomal subunit protein uL13 (154 aa).

Belongs to the universal ribosomal protein uL13 family. As to quaternary structure, part of the 50S ribosomal subunit.

This protein is one of the early assembly proteins of the 50S ribosomal subunit, although it is not seen to bind rRNA by itself. It is important during the early stages of 50S assembly. This Agrobacterium fabrum (strain C58 / ATCC 33970) (Agrobacterium tumefaciens (strain C58)) protein is Large ribosomal subunit protein uL13.